The chain runs to 188 residues: Elongation factor P-like protein (188 aa).

It belongs to the elongation factor P family.

The chain is Elongation factor P-like protein from Stenotrophomonas maltophilia (strain R551-3).